The primary structure comprises 360 residues: Protein RecA (360 aa).

64–71 (GHESSGKT) serves as a coordination point for ATP. Positions 333-360 (QEQVQPEPKSKQSKSKQASEQATQDELI) are disordered.

This sequence belongs to the RecA family.

The protein resides in the cytoplasm. Functionally, can catalyze the hydrolysis of ATP in the presence of single-stranded DNA, the ATP-dependent uptake of single-stranded DNA by duplex DNA, and the ATP-dependent hybridization of homologous single-stranded DNAs. It interacts with LexA causing its activation and leading to its autocatalytic cleavage. The chain is Protein RecA from Francisella philomiragia subsp. philomiragia (strain ATCC 25017 / CCUG 19701 / FSC 153 / O#319-036).